Here is a 702-residue protein sequence, read N- to C-terminus: Dynein intermediate chain 2, ciliary (702 aa).

Residues 1 to 11 (MPVKSTKTKGG) show a composition bias toward low complexity. 3 disordered regions span residues 1 to 64 (MPVK…IKPD), 128 to 226 (DEAR…FSST), and 243 to 272 (QEKAKEKKAAPSKKDDDKSKKKLTALETQS). 2 stretches are compositionally biased toward basic and acidic residues: residues 36–52 (GKKDDDDATEAGEHGGE) and 152–176 (GEEKKEEDGEQKTEEPKEGEKRDEE). The span at 189 to 206 (KLTNQFNFSERASQTYNN) shows a compositional bias: polar residues. Residues 243 to 261 (QEKAKEKKAAPSKKDDDKS) show a composition bias toward basic and acidic residues. WD repeat units follow at residues 380–420 (PTDS…ANPV), 429–472 (KHTD…LTYT), 490–533 (TQLT…QFLD), 537–577 (AHHM…GPMF), 580–620 (DLGS…YEPI), and 628–667 (KKKTKLTHITFNPNFPIVLVGDDRGYVSSLKLSPNLRKVP).

This sequence belongs to the dynein intermediate chain family. In terms of assembly, consists of at least two heavy chains (alpha and beta), three intermediate chains and several light chains.

It localises to the cytoplasm. The protein localises to the cytoskeleton. Its subcellular location is the cilium axoneme. In terms of biological role, microtubule-binding protein that may be involved in dynein outer arm assembly on the axoneme. This Heliocidaris crassispina (Sea urchin) protein is Dynein intermediate chain 2, ciliary.